The chain runs to 204 residues: Ras-related protein Rab-7L1 (204 aa).

The GTP site is built by S33, K34, H35, Y36, K37, and T39. An Effector region motif is present at residues 36–44 (YKSTVGVDF). T71 is modified (phosphothreonine; by LRRK2). S72 carries the phosphoserine modification. GTP contacts are provided by K126, V156, and K157. 2 S-geranylgeranyl cysteine lipidation sites follow: C203 and C204.

It belongs to the small GTPase superfamily. Rab family. In terms of assembly, interacts with LRRK2 (via the N-terminus); this interaction is direct and stimulates kinase activity.

It localises to the cell membrane. The protein resides in the cytoplasm. Its subcellular location is the perinuclear region. It is found in the golgi apparatus. The protein localises to the golgi apparatus membrane. It localises to the trans-Golgi network. The protein resides in the cytoskeleton. In terms of biological role, the small GTPases Rab are key regulators in vesicle trafficking. Essential for maintaining the integrity of endosome-trans-Golgi network structure. Together with LRRK2, plays a role in the retrograde trafficking pathway for recycling proteins, such as mannose 6 phosphate receptor (M6PR), between lysosomes and the Golgi apparatus in a retromer-dependent manner. Recruits LRRK2 to the Golgi apparatus and stimulates LRRK2 kinase activity. Stimulates phosphorylation of RAB10 'Thr-73' by LRRK2. Also regulates neuronal process morphology in the intact central nervous system (CNS). In Mus musculus (Mouse), this protein is Ras-related protein Rab-7L1 (Rab29).